A 492-amino-acid polypeptide reads, in one-letter code: Cytochrome P450 2B19 (492 aa).

Phosphoserine; by PKA is present on Ser129. Position 437 (Cys437) interacts with heme.

Belongs to the cytochrome P450 family. Heme is required as a cofactor. In terms of tissue distribution, expressed only in differentiated keratinocytes in skin.

It is found in the endoplasmic reticulum membrane. It localises to the microsome membrane. The enzyme catalyses an organic molecule + reduced [NADPH--hemoprotein reductase] + O2 = an alcohol + oxidized [NADPH--hemoprotein reductase] + H2O + H(+). In terms of biological role, cytochromes P450 are a group of heme-thiolate monooxygenases. In liver microsomes, this enzyme is involved in an NADPH-dependent electron transport pathway. It oxidizes a variety of structurally unrelated compounds, including steroids, fatty acids, and xenobiotics. The sequence is that of Cytochrome P450 2B19 (Cyp2b19) from Mus musculus (Mouse).